The following is a 98-amino-acid chain: Putative protein adenylyltransferase MJ0128 (98 aa).

Positions 31 to 45 (GSYARNEQTEKSDID) match the GSX(10)DXD motif motif. The Mg(2+) site is built by Asp-43, Asp-45, and Asp-75.

Belongs to the MntA antitoxin family. Probably forms a complex with cognate toxin MJ0127. Mg(2+) serves as cofactor.

It catalyses the reaction L-tyrosyl-[protein] + ATP = O-(5'-adenylyl)-L-tyrosyl-[protein] + diphosphate. The catalysed reaction is O-(5'-adenylyl)-L-tyrosyl-[protein] + ATP = O-[5'-(adenylyl-(5'-&gt;3')-adenylyl)]-L-tyrosyl-[protein] + diphosphate. Its function is as follows. Probable antitoxin component of a putative type VII toxin-antitoxin (TA) system. Neutralizes cognate toxic MJ0127 by di-AMPylation. The polypeptide is Putative protein adenylyltransferase MJ0128 (Methanocaldococcus jannaschii (strain ATCC 43067 / DSM 2661 / JAL-1 / JCM 10045 / NBRC 100440) (Methanococcus jannaschii)).